A 452-amino-acid polypeptide reads, in one-letter code: AP-4 complex subunit mu-1 (452 aa).

Positions 184 to 451 constitute an MHD domain; the sequence is KNEVFLDVVE…LSHSDAYVIR (268 aa).

Belongs to the adaptor complexes medium subunit family. In terms of assembly, adaptor protein complex 4 (AP-4) is a heterotetramer composed of two large adaptins (epsilon-type subunit AP4E1 and beta-type subunit AP4B1), a medium adaptin (mu-type subunit AP4M1) and a small adaptin (sigma-type AP4S1). Interacts with tyrosine-based sorting signals on the cytoplasmic tail of cargo proteins such as APP, ATG9A, LAMP2 and NAGPA. Interacts with the C-terminal domain of GRID2. Interacts with GRIA1 and GRIA2; the interaction is indirect via CACNG3. Interacts with CACNG3; CACNG3 associates GRIA1 and GRIA2 with the adaptor protein complex 4 (AP-4) to target them to the somatodendritic compartment of neurons. Interacts with HOOK1 and HOOK2; the interactions are direct, mediate the interaction between FTS-Hook-FHIP (FHF) complex and AP-4 and the perinuclear distribution of AP-4.

It is found in the golgi apparatus. The protein localises to the trans-Golgi network membrane. It localises to the early endosome. Its function is as follows. Component of the adaptor protein complex 4 (AP-4). Adaptor protein complexes are vesicle coat components involved both in vesicle formation and cargo selection. They control the vesicular transport of proteins in different trafficking pathways. AP-4 forms a non clathrin-associated coat on vesicles departing the trans-Golgi network (TGN) and may be involved in the targeting of proteins from the trans-Golgi network (TGN) to the endosomal-lysosomal system. It is also involved in protein sorting to the basolateral membrane in epithelial cells and the proper asymmetric localization of somatodendritic proteins in neurons. Within AP-4, the mu-type subunit AP4M1 is directly involved in the recognition and binding of tyrosine-based sorting signals found in the cytoplasmic part of cargos. The adaptor protein complex 4 (AP-4) may also recognize other types of sorting signal. The polypeptide is AP-4 complex subunit mu-1 (Bos taurus (Bovine)).